A 551-amino-acid polypeptide reads, in one-letter code: Dihydroxy-acid dehydratase (551 aa).

Mg(2+) is bound at residue D78. C119 contributes to the [2Fe-2S] cluster binding site. Mg(2+) contacts are provided by D120 and K121. K121 bears the N6-carboxylysine mark. A [2Fe-2S] cluster-binding site is contributed by C191. A Mg(2+)-binding site is contributed by E441. The active-site Proton acceptor is the S467.

It belongs to the IlvD/Edd family. Homodimer. It depends on [2Fe-2S] cluster as a cofactor. The cofactor is Mg(2+).

It carries out the reaction (2R)-2,3-dihydroxy-3-methylbutanoate = 3-methyl-2-oxobutanoate + H2O. The enzyme catalyses (2R,3R)-2,3-dihydroxy-3-methylpentanoate = (S)-3-methyl-2-oxopentanoate + H2O. It participates in amino-acid biosynthesis; L-isoleucine biosynthesis; L-isoleucine from 2-oxobutanoate: step 3/4. It functions in the pathway amino-acid biosynthesis; L-valine biosynthesis; L-valine from pyruvate: step 3/4. In terms of biological role, functions in the biosynthesis of branched-chain amino acids. Catalyzes the dehydration of (2R,3R)-2,3-dihydroxy-3-methylpentanoate (2,3-dihydroxy-3-methylvalerate) into 2-oxo-3-methylpentanoate (2-oxo-3-methylvalerate) and of (2R)-2,3-dihydroxy-3-methylbutanoate (2,3-dihydroxyisovalerate) into 2-oxo-3-methylbutanoate (2-oxoisovalerate), the penultimate precursor to L-isoleucine and L-valine, respectively. The polypeptide is Dihydroxy-acid dehydratase (Pyrococcus abyssi (strain GE5 / Orsay)).